We begin with the raw amino-acid sequence, 940 residues long: Valine--tRNA ligase (940 aa).

Positions 47-57 (PNVTGILHMGH) match the 'HIGH' region motif. The 'KMSKS' region motif lies at 564 to 568 (KLSKS). K567 provides a ligand contact to ATP. The stretch at 872-938 (PMEHITKERN…LQSILDKLAS (67 aa)) forms a coiled coil.

It belongs to the class-I aminoacyl-tRNA synthetase family. ValS type 1 subfamily. In terms of assembly, monomer.

The protein localises to the cytoplasm. It catalyses the reaction tRNA(Val) + L-valine + ATP = L-valyl-tRNA(Val) + AMP + diphosphate. Its function is as follows. Catalyzes the attachment of valine to tRNA(Val). As ValRS can inadvertently accommodate and process structurally similar amino acids such as threonine, to avoid such errors, it has a 'posttransfer' editing activity that hydrolyzes mischarged Thr-tRNA(Val) in a tRNA-dependent manner. This Chlamydia caviae (strain ATCC VR-813 / DSM 19441 / 03DC25 / GPIC) (Chlamydophila caviae) protein is Valine--tRNA ligase.